The following is a 210-amino-acid chain: Fimbriae Z protein (210 aa).

In terms of domain architecture, Response regulatory spans 5–121 (SVIIMDEHPI…DIYNAVKMIL (117 aa)). D56 is modified (4-aspartylphosphate). The HTH luxR-type domain maps to 143–208 (GGHHDMPLSN…ELIDYAKSHE (66 aa)). The H-T-H motif DNA-binding region spans 167–186 (NKEIAEQLLLSNKTISAHKA).

The protein resides in the cytoplasm. The polypeptide is Fimbriae Z protein (fimZ) (Salmonella typhimurium (strain LT2 / SGSC1412 / ATCC 700720)).